A 615-amino-acid polypeptide reads, in one-letter code: Elongation factor 4 (615 aa).

A tr-type G domain is found at A14–T200. GTP is bound by residues D26 to T31 and N147 to D150.

The protein belongs to the TRAFAC class translation factor GTPase superfamily. Classic translation factor GTPase family. LepA subfamily.

It localises to the cell membrane. The enzyme catalyses GTP + H2O = GDP + phosphate + H(+). Its function is as follows. Required for accurate and efficient protein synthesis under certain stress conditions. May act as a fidelity factor of the translation reaction, by catalyzing a one-codon backward translocation of tRNAs on improperly translocated ribosomes. Back-translocation proceeds from a post-translocation (POST) complex to a pre-translocation (PRE) complex, thus giving elongation factor G a second chance to translocate the tRNAs correctly. Binds to ribosomes in a GTP-dependent manner. The sequence is that of Elongation factor 4 from Corynebacterium glutamicum (strain ATCC 13032 / DSM 20300 / JCM 1318 / BCRC 11384 / CCUG 27702 / LMG 3730 / NBRC 12168 / NCIMB 10025 / NRRL B-2784 / 534).